The chain runs to 30 residues: Cyclotide psyleio E (30 aa).

A cross-link (cyclopeptide (Ser-Lys)) is located at residues 1–30; that stretch reads SVTPIVCGETCFGGTCNTPGCSCSWPICTK. Disulfide bonds link Cys7–Cys21, Cys11–Cys23, and Cys16–Cys28.

Post-translationally, this is a cyclic peptide.

Functionally, probably participates in a plant defense mechanism. The polypeptide is Cyclotide psyleio E (Psychotria leiocarpa).